Consider the following 91-residue polypeptide: RNA-binding protein Hfq (91 aa).

Positions 9–68 constitute a Sm domain; sequence DPYLNALRRERIPVSIYLVNGIKLQGQIESFDQFVILLKNTVNQMVYKHAISTVVPARSV. The segment at 68–91 is disordered; it reads VSHHNNNHHTTPTEAVENVETQAE.

This sequence belongs to the Hfq family. Homohexamer.

RNA chaperone that binds small regulatory RNA (sRNAs) and mRNAs to facilitate mRNA translational regulation in response to envelope stress, environmental stress and changes in metabolite concentrations. Also binds with high specificity to tRNAs. The polypeptide is RNA-binding protein Hfq (Haemophilus influenzae (strain 86-028NP)).